Here is a 662-residue protein sequence, read N- to C-terminus: Forkhead box protein O1 (662 aa).

Disordered stretches follow at residues 1–62 and 122–165; these read MAEA…PSAS and GCLH…SRRN. Thr24 bears the Phosphothreonine; by PKB/AKT1 or PKB/AKT2 and SGK1 mark. A compositionally biased stretch (low complexity) spans 33–62; the sequence is SQSNSATSSPAPSGGAAANPDAAAGLPSAS. Residues 126 to 146 show a composition bias toward pro residues; sequence PAPPQQPPPPGPLSQHPPVPP. Residues 167–261 constitute a DNA-binding region (fork-head); that stretch reads WGNLSYADLI…KSGKSPRRRA (95 aa). DNA-binding stretches follow at residues 218-225 and 241-244; these read NSIRHNLS and SSWW. At Ser219 the chain carries Phosphoserine; by STK4/MST1. A phosphoserine mark is found at Ser225, Ser241, and Ser242. Positions 241–342 are disordered; the sequence is SSWWMLNPEG…GRLSPIMTEQ (102 aa). 2 positions are modified to N6-acetyllysine: Lys252 and Lys255. Ser256 carries the post-translational modification Phosphoserine; by CDK1. Residues Arg258 and Arg260 each carry the omega-N-methylarginine; by PRMT1 modification. The Nuclear localization signal motif lies at 258-260; that stretch reads RRR. At Ser263 the chain carries Phosphoserine; by PKB/AKT1 and SGK1. 3 positions are modified to N6-acetyllysine: Lys269, Lys272, and Lys281. The segment covering 271-282 has biased composition (basic residues); the sequence is AKSRGRAAKKKA. The sufficient for interaction with NLK stretch occupies residues 290–570; that stretch reads GAGDSPGSQF…RLTQEKTALQ (281 aa). Residues Ser294 and Ser305 each carry the phosphoserine modification. Over residues 316–333 the composition is skewed to polar residues; sequence NWSTFRPRTSSNASTISG. Position 326 is a phosphoserine; by PKB/AKT1 (Ser326). Ser329 carries the post-translational modification Phosphoserine; by CK1 and SGK1. Residue Ser332 is modified to Phosphoserine; by CK1. Ser336 carries the post-translational modification Phosphoserine; by DYRK1A. Position 340 is a phosphothreonine (Thr340). The required for interaction with RUNX2 stretch occupies residues 370–466; that stretch reads SEISNPENME…GGMAQYNCAA (97 aa). N6-acetyllysine is present on Lys430. Positions 469–473 match the Required for interaction with SIRT1 motif; it reads LKELL.

As to quaternary structure, interacts with LRPPRC. Interacts with RUNX2; the interaction inhibits RUNX2 transcriptional activity and mediates the IGF1/insulin-dependent BGLAP expression in osteoblasts Interacts with PPP2R1A; the interaction regulates the dephosphorylation of FOXO1 at Thr-24 and Ser-263 leading to its nuclear import. Interacts with NLK. Interacts with SIRT1; the interaction results in the deacetylation of FOXO1 leading to activation of FOXO1-mediated transcription of genes involved in DNA repair and stress resistance. Binds to CDK1. Interacts with the 14-3-3 proteins, YWHAG and YWHAZ; the interactions require insulin-stimulated phosphorylation on Thr-24, promote nuclear exit and loss of transcriptional activity. Interacts with SKP2; the interaction ubiquitinates FOXO1 leading to its proteasomal degradation. The interaction requires the presence of KRIT1. Interacts (via the C-terminal half) with ATF4 (via its DNA binding domain); the interaction occurs in osteoblasts, regulates glucose homeostasis via suppression of beta-cell proliferation and subsequent decrease in insulin production. Interacts with PRMT1; the interaction methylates FOXO1, prevents PKB/AKT1 phosphorylation and retains FOXO1 in the nucleus. Interacts with EP300 and CREBBP; the interactions acetylate FOXO1. Interacts with SIRT2; the interaction is disrupted in response to oxidative stress or serum deprivation, leading to increased level of acetylated FOXO1, which promotes stress-induced autophagy by stimulating E1-like activating enzyme ATG7. Interacts (acetylated form) with ATG7; the interaction is increased in response to oxidative stress or serum deprivation and promotes the autophagic process leading to cell death. Interacts (acetylated form) with PPARG. Interacts with XBP1; this interaction is direct and leads to FOXO1 ubiquitination and degradation via the proteasome pathway. Interacts (via the Fork-head domain) with CEBPA; the interaction increases when FOXO1 is deacetylated. Interacts with WDFY2. Forms a complex with WDFY2 and AKT1. Interacts with CRY1. Interacts with PPIA/CYPA; the interaction promotes FOXO1 dephosphorylation, nuclear accumulation and transcriptional activity. Interacts with TOX4; FOXO1 is required for full induction of TOX4-dependent activity and the interaction is inhibited by insulin. Interacts (when phosphorylated on Ser-263) with STUB1/CHIP. Post-translationally, phosphorylation by NLK promotes nuclear export and inhibits the transcriptional activity. In response to growth factors, phosphorylation on Thr-24, Ser-263 and Ser-326 by PKB/AKT1 promotes nuclear export and inactivation of transactivational activity. Phosphorylation on Thr-24 is required for binding 14-3-3 proteins. Phosphorylation of Ser-263 decreases DNA-binding activity and promotes the phosphorylation of Thr-24 and Ser-326, permitting phosphorylation of Ser-329 and Ser-332, probably by CDK1, leading to nuclear exclusion and loss of function. Stress signals, such as response to oxygen or nitric oxide, attenuate the PKB/AKT1-mediated phosphorylation leading to nuclear retention. Phosphorylation of Ser-336 is independent of IGF1 and leads to reduced function. Dephosphorylated on Thr-24 and Ser-263 by PP2A in beta-cells under oxidative stress leading to nuclear retention. Phosphorylation of Ser-256 by CDK1 disrupts binding of 14-3-3 proteins leading to nuclear accumulation and has no effect on DNA binding nor transcriptional activity. Phosphorylation by STK4/MST1 on Ser-219, upon oxidative stress, inhibits binding to 14-3-3 proteins and nuclear export. PPIA/CYPA promotes its dephosphorylation on Ser-263. In terms of processing, ubiquitinated by SKP2. Ubiquitination leads to proteasomal degradation. Ubiquitinated by STUB1/CHIP; when Ser-263 is phosphorylated. Methylation inhibits AKT1-mediated phosphorylation at Ser-263 and is increased by oxidative stress. Post-translationally, acetylated. Acetylation at Lys-269 and Lys-281 are necessary for autophagic cell death induction. Deacetylated by SIRT2 in response to oxidative stress or serum deprivation, thereby negatively regulating FOXO1-mediated autophagic cell death. Once in the nucleus, acetylated by CREBBP/EP300. Acetylation diminishes the interaction with target DNA and attenuates the transcriptional activity. It increases the phosphorylation at Ser-263. Deacetylation by SIRT1 results in reactivation of the transcriptional activity. Oxidative stress by hydrogen peroxide treatment appears to promote deacetylation and uncoupling of insulin-induced phosphorylation. By contrast, resveratrol acts independently of acetylation. Acetylated at Lys-430, promoting its localization to the nucleus and transcription factor activity. Deacetylation at Lys-430 by SIRT6, promotes its translocation into the cytoplasm, preventing its transcription factor activity. Deacetylation and subsequent inhibition by SIRT6 has different effects depending on cell types: it inhibits gluconeogenesis in hepatocytes, promotes glucose sensing in pancreatic beta-cells and regulates lipid catabolism in brown adipocytes. Highly in subcutaneous adipose and visceral adipose tissues. Levels higher in piglets than in adults. Also expressed at lower levels in liver and muscle.

It localises to the cytoplasm. It is found in the nucleus. Its function is as follows. Transcription factor that is the main target of insulin signaling and regulates metabolic homeostasis in response to oxidative stress. Binds to the insulin response element (IRE) with consensus sequence 5'-TT[G/A]TTTTG-3' and the related Daf-16 family binding element (DBE) with consensus sequence 5'-TT[G/A]TTTAC-3'. Activity suppressed by insulin. Main regulator of redox balance and osteoblast numbers and controls bone mass. Orchestrates the endocrine function of the skeleton in regulating glucose metabolism. Also acts as a key regulator of chondrogenic commitment of skeletal progenitor cells in response to lipid availability: when lipids levels are low, translocates to the nucleus and promotes expression of SOX9, which induces chondrogenic commitment and suppresses fatty acid oxidation. Acts synergistically with ATF4 to suppress osteocalcin/BGLAP activity, increasing glucose levels and triggering glucose intolerance and insulin insensitivity. Also suppresses the transcriptional activity of RUNX2, an upstream activator of osteocalcin/BGLAP. Acts as an inhibitor of glucose sensing in pancreatic beta cells by acting as a transcription repressor and suppressing expression of PDX1. In hepatocytes, promotes gluconeogenesis by acting together with PPARGC1A and CEBPA to activate the expression of genes such as IGFBP1, G6PC1 and PCK1. Also promotes gluconeogenesis by directly promoting expression of PPARGC1A and G6PC1. Important regulator of cell death acting downstream of CDK1, PKB/AKT1 and STK4/MST1. Promotes neural cell death. Mediates insulin action on adipose tissue. Regulates the expression of adipogenic genes such as PPARG during preadipocyte differentiation and, adipocyte size and adipose tissue-specific gene expression in response to excessive calorie intake. Regulates the transcriptional activity of GADD45A and repair of nitric oxide-damaged DNA in beta-cells. Required for the autophagic cell death induction in response to starvation or oxidative stress in a transcription-independent manner. Mediates the function of MLIP in cardiomyocytes hypertrophy and cardiac remodeling. Positive regulator of apoptosis in cardiac smooth muscle cells as a result of its transcriptional activation of pro-apoptotic genes. Regulates endothelial cell (EC) viability and apoptosis in a PPIA/CYPA-dependent manner via transcription of CCL2 and BCL2L11 which are involved in EC chemotaxis and apoptosis. The chain is Forkhead box protein O1 (FOXO1) from Sus scrofa (Pig).